We begin with the raw amino-acid sequence, 844 residues long: Protein translocase subunit SecA (844 aa).

ATP-binding positions include Q87, 105 to 109, and D495; that span reads GEGKT. Residues 783 to 800 are compositionally biased toward basic and acidic residues; sequence QAPPEELKQEFKHKEEPK. Residues 783 to 844 are disordered; it reads QAPPEELKQE…GQKYKKCCGA (62 aa). Polar residues predominate over residues 802–811; sequence LNYSGAQKET. Residues 816-826 are compositionally biased toward basic and acidic residues; the sequence is PERRGEPKVGR. C830, C832, C841, and C842 together coordinate Zn(2+).

Belongs to the SecA family. In terms of assembly, monomer and homodimer. Part of the essential Sec protein translocation apparatus which comprises SecA, SecYEG and auxiliary proteins SecDF-YajC and YidC. The cofactor is Zn(2+).

The protein resides in the cell inner membrane. It is found in the cytoplasm. The enzyme catalyses ATP + H2O + cellular proteinSide 1 = ADP + phosphate + cellular proteinSide 2.. In terms of biological role, part of the Sec protein translocase complex. Interacts with the SecYEG preprotein conducting channel. Has a central role in coupling the hydrolysis of ATP to the transfer of proteins into and across the cell membrane, serving as an ATP-driven molecular motor driving the stepwise translocation of polypeptide chains across the membrane. The polypeptide is Protein translocase subunit SecA (Nitratidesulfovibrio vulgaris (strain DSM 19637 / Miyazaki F) (Desulfovibrio vulgaris)).